The sequence spans 398 residues: MTDTILDPYFGEFGGMYVPEILIPVLKQLEKAFVEAQQDPAFQTEFLDLLKNYAGRPTALTLCRNLTKGTKTKLYLKREDLLHGGAHKTNQVLGQILLAKRMGKTRIIAETGAGQHGVATALACAMLGMPCRIYMGAKDVERQSPNVFRMRLMGAEVFPVTKGSSTLKDACCEAMRDWAANYENTHYLIGTAAGPHPFPTIVREFQKMIGEETKAQILQREGRLPDAVIACVGGGSNAIGMFTDFINETSVRLIGVEPAGKGIETGEHGAPLGHGKPGIYFGMKSPIMQTEDGQIEESYSISAGLDFPSVGPQHAYLNSIGRAEYPSITDDEALEAFKELAQHEGIIPALESSHALAYALKMARQNPMREQLLVVNLSGRGDKDIFTVDKIFSERGML.

N6-(pyridoxal phosphate)lysine is present on Lys88.

The protein belongs to the TrpB family. Tetramer of two alpha and two beta chains. Pyridoxal 5'-phosphate is required as a cofactor.

The catalysed reaction is (1S,2R)-1-C-(indol-3-yl)glycerol 3-phosphate + L-serine = D-glyceraldehyde 3-phosphate + L-tryptophan + H2O. It participates in amino-acid biosynthesis; L-tryptophan biosynthesis; L-tryptophan from chorismate: step 5/5. Functionally, the beta subunit is responsible for the synthesis of L-tryptophan from indole and L-serine. In Mannheimia succiniciproducens (strain KCTC 0769BP / MBEL55E), this protein is Tryptophan synthase beta chain.